Here is a 307-residue protein sequence, read N- to C-terminus: UDP-3-O-acyl-N-acetylglucosamine deacetylase (307 aa).

3 residues coordinate Zn(2+): His78, His241, and Asp245. The active-site Proton donor is the His268.

This sequence belongs to the LpxC family. Requires Zn(2+) as cofactor.

The enzyme catalyses a UDP-3-O-[(3R)-3-hydroxyacyl]-N-acetyl-alpha-D-glucosamine + H2O = a UDP-3-O-[(3R)-3-hydroxyacyl]-alpha-D-glucosamine + acetate. It functions in the pathway glycolipid biosynthesis; lipid IV(A) biosynthesis; lipid IV(A) from (3R)-3-hydroxytetradecanoyl-[acyl-carrier-protein] and UDP-N-acetyl-alpha-D-glucosamine: step 2/6. Its function is as follows. Catalyzes the hydrolysis of UDP-3-O-myristoyl-N-acetylglucosamine to form UDP-3-O-myristoylglucosamine and acetate, the committed step in lipid A biosynthesis. This Polaromonas naphthalenivorans (strain CJ2) protein is UDP-3-O-acyl-N-acetylglucosamine deacetylase.